A 355-amino-acid chain; its full sequence is S-adenosylmethionine:tRNA ribosyltransferase-isomerase (355 aa).

Belongs to the QueA family. In terms of assembly, monomer.

The protein localises to the cytoplasm. It catalyses the reaction 7-aminomethyl-7-carbaguanosine(34) in tRNA + S-adenosyl-L-methionine = epoxyqueuosine(34) in tRNA + adenine + L-methionine + 2 H(+). It participates in tRNA modification; tRNA-queuosine biosynthesis. Transfers and isomerizes the ribose moiety from AdoMet to the 7-aminomethyl group of 7-deazaguanine (preQ1-tRNA) to give epoxyqueuosine (oQ-tRNA). The sequence is that of S-adenosylmethionine:tRNA ribosyltransferase-isomerase from Burkholderia orbicola (strain AU 1054).